The following is a 477-amino-acid chain: MQVLHVCSEMFPLLKTGGLADVIGALPAAQIADGIDVRVLLPGFPDIRRGIPDAHVVSRRDTFAGKISLLFGHYNGVGVYLIDAPHLYERPGSPYHDTNLYAYTDNVLRFALLGWVGCEMACGLDPFWRPDVVHAHDWHAGLAPAYLAARGRPAKSVFTVHNLAYQGMFYAKHIDDIELPWSFFNMHGLEFNGQISFLKAGLYYADHITAVSPTYAREITEPQFAYGMEGLLRQRHLEGRLSGVLNGVDEKIWSPESDLLLASRYTRDTLEEKAENKRQLQIAMGLKVNDKVPLFAVVSRLTSQKGLDLVLEALPGLLEQGGQLALLGAGDPVLQEGFLAAAAEHPGQVGVQIGYHEAFSHRIMGGADIILVPSRFEPCGLTQLYGLKYGTLPLVRRTGGLADTVSDSSLENLADGIASGFVFEDSNAWSLLRAIRRAFVLWSRPSLWRFVQRQAMAMDFSWQVAAKSYRELYYRLK.

Lysine 15 is a binding site for ADP-alpha-D-glucose.

Belongs to the glycosyltransferase 1 family. Bacterial/plant glycogen synthase subfamily.

The catalysed reaction is [(1-&gt;4)-alpha-D-glucosyl](n) + ADP-alpha-D-glucose = [(1-&gt;4)-alpha-D-glucosyl](n+1) + ADP + H(+). The protein operates within glycan biosynthesis; glycogen biosynthesis. Synthesizes alpha-1,4-glucan chains using ADP-glucose. This chain is Glycogen synthase, found in Salmonella arizonae (strain ATCC BAA-731 / CDC346-86 / RSK2980).